Here is a 37-residue protein sequence, read N- to C-terminus: Large ribosomal subunit protein bL36 (37 aa).

Belongs to the bacterial ribosomal protein bL36 family.

The polypeptide is Large ribosomal subunit protein bL36 (Streptomyces griseus subsp. griseus (strain JCM 4626 / CBS 651.72 / NBRC 13350 / KCC S-0626 / ISP 5235)).